The primary structure comprises 126 residues: Small ribosomal subunit protein uS13 (126 aa).

The disordered stretch occupies residues 92–126; that stretch reads HRRGLPVRGQRTKTNARTRKGPRKTVAGKKKATRK.

This sequence belongs to the universal ribosomal protein uS13 family. In terms of assembly, part of the 30S ribosomal subunit. Forms a loose heterodimer with protein S19. Forms two bridges to the 50S subunit in the 70S ribosome.

Its function is as follows. Located at the top of the head of the 30S subunit, it contacts several helices of the 16S rRNA. In the 70S ribosome it contacts the 23S rRNA (bridge B1a) and protein L5 of the 50S subunit (bridge B1b), connecting the 2 subunits; these bridges are implicated in subunit movement. Contacts the tRNAs in the A and P-sites. This Deinococcus geothermalis (strain DSM 11300 / CIP 105573 / AG-3a) protein is Small ribosomal subunit protein uS13.